A 444-amino-acid chain; its full sequence is tRNA modification GTPase MnmE (444 aa).

The (6S)-5-formyl-5,6,7,8-tetrahydrofolate site is built by arginine 21, glutamate 79, and lysine 118. The region spanning 215–365 (GLNVVIVGKP…LVNEIKTNLK (151 aa)) is the TrmE-type G domain. Residue asparagine 225 participates in K(+) binding. GTP contacts are provided by residues 225 to 230 (NVGKSS), 244 to 250 (SDIKGTT), and 269 to 272 (DTAG). Residue serine 229 coordinates Mg(2+). Serine 244, isoleucine 246, and threonine 249 together coordinate K(+). Threonine 250 contacts Mg(2+). Lysine 444 provides a ligand contact to (6S)-5-formyl-5,6,7,8-tetrahydrofolate.

It belongs to the TRAFAC class TrmE-Era-EngA-EngB-Septin-like GTPase superfamily. TrmE GTPase family. As to quaternary structure, homodimer. Heterotetramer of two MnmE and two MnmG subunits. K(+) is required as a cofactor.

The protein resides in the cytoplasm. In terms of biological role, exhibits a very high intrinsic GTPase hydrolysis rate. Involved in the addition of a carboxymethylaminomethyl (cmnm) group at the wobble position (U34) of certain tRNAs, forming tRNA-cmnm(5)s(2)U34. The sequence is that of tRNA modification GTPase MnmE from Malacoplasma penetrans (strain HF-2) (Mycoplasma penetrans).